Consider the following 820-residue polypeptide: Pentatricopeptide repeat-containing protein At3g22150, chloroplastic (820 aa).

Residues 1-42 (MAGSALPLPPPPPLSLQSPSQNQTRHSSTFSPPTLTPQTPSI) form a disordered region. A chloroplast-targeting transit peptide spans 1–50 (MAGSALPLPPPPPLSLQSPSQNQTRHSSTFSPPTLTPQTPSIRSRLSKIC). Positions 22–42 (NQTRHSSTFSPPTLTPQTPSI) are enriched in polar residues. PPR repeat units lie at residues 69–99 (TTVLWNTIIIGFICNNLPHEALLFYSRMKKT), 106–136 (DAYTYSSTLKACAETKNLKAGKAVHCHLIRC), 141–177 (SRVVHNSLMNMYVSCLNAPDCFEYDVVRKVFDNMRRK), 178–212 (NVVAWNTLISWYVKTGRNAEACRQFGIMMRMEVKP), 213–247 (SPVSFVNVFPAVSISRSIKKANVFYGLMLKLGDEY), 250–284 (DLFVVSSAISMYAELGDIESSRRVFDSCVERNIEV), 285–316 (WNTMIGVYVQNDCLVESIELFLEAIGSKEIVS), 317–347 (DEVTYLLAASAVSALQQVELGRQFHGFVSKN), 352–382 (PIVIVNSLMVMYSRCGSVHKSFGVFLSMRER), 383–417 (DVVSWNTMISAFVQNGLDDEGLMLVYEMQKQGFKI), 418–452 (DYITVTALLSAASNLRNKEIGKQTHAFLIRQGIQF), 485–519 (DQATWNSMISGYTQNGHTEKTFLVFRKMLEQNIRP), 520–550 (NAVTVASILPACSQIGSVDLGKQLHGFSIRQ), 555–585 (NVFVASALVDMYSKAGAIKYAEDMFSQTKER), 586–620 (NSVTYTTMILGYGQHGMGERAISLFLSMQESGIKP), 621–651 (DAITFVAVLSACSYSGLIDEGLKIFEEMREV), and 657–691 (SSEHYCCITDMLGRVGRVNEAYEFVKGLGEEGNIA). Positions 693–770 (LWGSLLGSCK…EVGRSGIEIA (78 aa)) are type E motif. Residues 771–801 (GYVNCFVSRDQEHPHSSEIYDVIDGLAKDMR) are type E(+) motif.

Belongs to the PPR family. PCMP-E subfamily.

It localises to the plastid. Its subcellular location is the chloroplast. The chain is Pentatricopeptide repeat-containing protein At3g22150, chloroplastic (PCMP-E95) from Arabidopsis thaliana (Mouse-ear cress).